Consider the following 159-residue polypeptide: MGVYTFENEFTSEIPPSRLFKAFVLDADNLIPKIAPQAIKQAEILEGNGGPGTIKKITFGEGSQYGYVKHRIDSIDEASYSYSYTLIEGDALTDTIEKISYETKLVACGSGSTIKSISHYHTKGNIEIKEEHVKVGKEKAHGLFKLIESYLKDHPDAYN.

It belongs to the BetVI family.

The chain is Major allergen Mal d 1 from Malus domestica (Apple).